The chain runs to 244 residues: Glucosamine-6-phosphate deaminase (244 aa).

The active-site Proton acceptor; for enolization step is the aspartate 67. The active-site For ring-opening step is asparagine 136. Histidine 138 acts as the Proton acceptor; for ring-opening step in catalysis. The active-site For ring-opening step is the glutamate 143.

The protein belongs to the glucosamine/galactosamine-6-phosphate isomerase family. NagB subfamily.

It carries out the reaction alpha-D-glucosamine 6-phosphate + H2O = beta-D-fructose 6-phosphate + NH4(+). It functions in the pathway amino-sugar metabolism; N-acetylneuraminate degradation; D-fructose 6-phosphate from N-acetylneuraminate: step 5/5. Functionally, catalyzes the reversible isomerization-deamination of glucosamine 6-phosphate (GlcN6P) to form fructose 6-phosphate (Fru6P) and ammonium ion. In Clostridium botulinum (strain Okra / Type B1), this protein is Glucosamine-6-phosphate deaminase.